The following is a 1253-amino-acid chain: Cytoplasmic FMR1-interacting protein 2 (1253 aa).

Lysine 1037 bears the N6-acetyllysine mark.

This sequence belongs to the CYFIP family. In terms of assembly, component of the WAVE1 complex composed of ABI2, CYFIP2, BRK1, NCKAP1 and WASF1/WAVE1. Interacts with RAC1 (activated form) which causes the complex to dissociate, releasing activated WASF1. The complex can also be activated by NCK1. Interacts with SHANK3; the interaction mediates the association of SHANK3 with the WAVE1 complex. Interacts with FMR1; the interaction occurs in a RNA-dependent manner. Interacts with FXR1 and FXR2. Interacts with TMEM108 (via N-terminus); the interaction associates TMEM108 with the WAVE1 complex.

The protein resides in the cytoplasm. It is found in the nucleus. It localises to the perinuclear region. Its subcellular location is the synapse. The protein localises to the synaptosome. Involved in T-cell adhesion and p53-dependent induction of apoptosis. Does not bind RNA. As component of the WAVE1 complex, required for BDNF-NTRK2 endocytic trafficking and signaling from early endosomes. This Pongo abelii (Sumatran orangutan) protein is Cytoplasmic FMR1-interacting protein 2.